Consider the following 150-residue polypeptide: Calmodulin-like protein 7 (150 aa).

4 consecutive EF-hand domains span residues Met1–Tyr36, Ile37–Glu72, Glu75–Lys110, and Lys113–Asn148. Residues Asp14, Asn16, Asp18, Thr20, Glu25, Asp50, Asn52, Asp54, Cys56, Glu61, Asp88, Asn90, Asp92, Glu99, Asp126, Asp128, Asp130, Arg132, and Glu137 each coordinate Ca(2+).

This sequence belongs to the calmodulin family.

In terms of biological role, potential calcium sensor. In Arabidopsis thaliana (Mouse-ear cress), this protein is Calmodulin-like protein 7 (CML7).